The following is a 492-amino-acid chain: NADH-quinone oxidoreductase subunit N (492 aa).

14 helical membrane passes run 16-36, 44-64, 81-101, 111-131, 134-154, 168-188, 210-230, 244-264, 276-296, 306-326, 332-352, 382-402, 423-443, and 463-483; these read LLIP…VGVF, LYIT…FLEG, ISLL…LFFM, GAEF…MASS, LILI…LIAL, FIMG…LYAA, ILVF…VTLV, NALL…AVII, AFVE…PNLI, MLAY…LINT, VIFF…GILW, LAIL…FCVF, IMAI…IYIF, and FALS…QNLL.

It belongs to the complex I subunit 2 family. In terms of assembly, NDH-1 is composed of 14 different subunits. Subunits NuoA, H, J, K, L, M, N constitute the membrane sector of the complex.

The protein resides in the cell inner membrane. It catalyses the reaction a quinone + NADH + 5 H(+)(in) = a quinol + NAD(+) + 4 H(+)(out). In terms of biological role, NDH-1 shuttles electrons from NADH, via FMN and iron-sulfur (Fe-S) centers, to quinones in the respiratory chain. The immediate electron acceptor for the enzyme in this species is believed to be ubiquinone. Couples the redox reaction to proton translocation (for every two electrons transferred, four hydrogen ions are translocated across the cytoplasmic membrane), and thus conserves the redox energy in a proton gradient. In Helicobacter hepaticus (strain ATCC 51449 / 3B1), this protein is NADH-quinone oxidoreductase subunit N.